The following is a 345-amino-acid chain: Phosphoribosylformylglycinamidine cyclo-ligase (345 aa).

Belongs to the AIR synthase family.

The protein localises to the cytoplasm. The enzyme catalyses 2-formamido-N(1)-(5-O-phospho-beta-D-ribosyl)acetamidine + ATP = 5-amino-1-(5-phospho-beta-D-ribosyl)imidazole + ADP + phosphate + H(+). Its pathway is purine metabolism; IMP biosynthesis via de novo pathway; 5-amino-1-(5-phospho-D-ribosyl)imidazole from N(2)-formyl-N(1)-(5-phospho-D-ribosyl)glycinamide: step 2/2. This Shewanella oneidensis (strain ATCC 700550 / JCM 31522 / CIP 106686 / LMG 19005 / NCIMB 14063 / MR-1) protein is Phosphoribosylformylglycinamidine cyclo-ligase.